We begin with the raw amino-acid sequence, 462 residues long: Transcription initiation factor TFIID subunit 7-like (462 aa).

Disordered regions lie at residues 1 to 97 and 327 to 366; these read MECP…VPDE and DSRS…SEEY. Low complexity-rich tracts occupy residues 16-30 and 66-77; these read STPT…SQQE and DADSSAQAAAQA. Acidic residues predominate over residues 333–365; the sequence is DDDEDEDDEDEDEDEDEDEDEDKEEEEEDCSEE. Residues 342–462 are a coiled coil; the sequence is DEDEDEDEDE…QEQLQRFLKK (121 aa).

This sequence belongs to the TAF7 family. TFIID is composed of TATA binding protein (TBP) and a number of TBP-associated factors (TAFs). TAF7L may replace TAF7 in a spermatogenesis-specific form of TFIID. Interacts with TBP; the interaction occurs in a sub-population of cells (pachytene and haploid round spermatids) and is developmentally regulated through differential intracellular localization of the two proteins. Interacts with TAF1. In terms of tissue distribution, testis-specific.

The protein resides in the nucleus. The protein localises to the cytoplasm. In terms of biological role, probably functions as a spermatogenesis-specific component of the DNA-binding general transcription factor complex TFIID, a multimeric protein complex that plays a central role in mediating promoter responses to various activators and repressors. May play a role in spermatogenesis. In Homo sapiens (Human), this protein is Transcription initiation factor TFIID subunit 7-like (TAF7L).